A 699-amino-acid polypeptide reads, in one-letter code: Endogenous retrovirus group K member 8 Env polyprotein (699 aa).

Residues 1–47 form a disordered region; sequence MNPSEMQRKAPPRRRRHRNRAPLTHKMNKMVTSEEQMKLPSTKKAEP. An N-terminal signal peptide occupies residues 1-89; that stretch reads MNPSEMQRKA…ALMIVSMVVS (89 aa). Residues 10–20 show a composition bias toward basic residues; that stretch reads APPRRRRHRNR. The Extracellular segment spans residues 90-632; that stretch reads LPMPAGAAVA…NLNPVTWVKT (543 aa). N-linked (GlcNAc...) asparagine glycosylation is found at asparagine 100, asparagine 128, asparagine 153, asparagine 274, asparagine 355, asparagine 372, and asparagine 461. The tract at residues 466 to 486 is fusion peptide; sequence FIFTLIAVIMGLIAVTATAAV. Residues asparagine 507, asparagine 554, asparagine 566, and asparagine 585 are each glycosylated (N-linked (GlcNAc...) asparagine). A helical transmembrane segment spans residues 633–653; it reads IGSTTIINLILILVCLFCLLL. The Cytoplasmic segment spans residues 654-699; it reads VCRCTQQLRRDSDHRERAMMTMAVLSKRKGGNVGKSKRDQIVTVSV.

This sequence belongs to the beta type-B retroviral envelope protein family. HERV class-II K(HML-2) env subfamily. As to quaternary structure, the surface (SU) and transmembrane (TM) proteins form a heterodimer. SU and TM are attached by noncovalent interactions or by a labile interchain disulfide bond. Specific enzymatic cleavages in vivo yield the mature SU and TM proteins.

Its subcellular location is the cell membrane. It localises to the virion. Functionally, retroviral envelope proteins mediate receptor recognition and membrane fusion during early infection. Endogenous envelope proteins may have kept, lost or modified their original function during evolution. This endogenous envelope protein has lost its original fusogenic properties. SU mediates receptor recognition. In terms of biological role, TM anchors the envelope heterodimer to the viral membrane through one transmembrane domain. The other hydrophobic domain, called fusion peptide, mediates fusion of the viral membrane with the target cell membrane. The chain is Endogenous retrovirus group K member 8 Env polyprotein (ERVK-8) from Homo sapiens (Human).